A 479-amino-acid polypeptide reads, in one-letter code: UDP-N-acetylmuramate--L-alanine ligase (479 aa).

An ATP-binding site is contributed by 115 to 121 (GTHGKTT).

It belongs to the MurCDEF family.

The protein resides in the cytoplasm. The enzyme catalyses UDP-N-acetyl-alpha-D-muramate + L-alanine + ATP = UDP-N-acetyl-alpha-D-muramoyl-L-alanine + ADP + phosphate + H(+). It participates in cell wall biogenesis; peptidoglycan biosynthesis. Cell wall formation. The protein is UDP-N-acetylmuramate--L-alanine ligase of Acidiphilium cryptum (strain JF-5).